The following is a 147-amino-acid chain: Large ribosomal subunit protein uL13 (147 aa).

The protein belongs to the universal ribosomal protein uL13 family. Part of the 50S ribosomal subunit.

Functionally, this protein is one of the early assembly proteins of the 50S ribosomal subunit, although it is not seen to bind rRNA by itself. It is important during the early stages of 50S assembly. The polypeptide is Large ribosomal subunit protein uL13 (Paenarthrobacter aurescens (strain TC1)).